Here is a 2531-residue protein sequence, read N- to C-terminus: Neurogenic locus notch homolog protein 1 (2531 aa).

An N-terminal signal peptide occupies residues 1-18 (MPRLLTPLLCLTLLPALA). At 19–1725 (ARGLRCSQPS…VEPPLPSQLH (1707 aa)) the chain is on the extracellular side. 4 EGF-like domains span residues 20–58 (RGLR…QRCQ), 59–99 (DSNP…PLCL), 102–139 (LDNA…KSCQ), and 140–176 (QADP…PTCR). 32 disulfide bridges follow: Cys24–Cys37, Cys31–Cys46, Cys63–Cys74, Cys68–Cys87, Cys89–Cys98, Cys106–Cys117, Cys111–Cys127, Cys129–Cys138, Cys144–Cys155, Cys149–Cys164, Cys166–Cys175, Cys182–Cys195, Cys189–Cys204, Cys206–Cys215, Cys222–Cys233, Cys227–Cys243, Cys245–Cys254, Cys261–Cys272, Cys266–Cys281, Cys283–Cys292, Cys299–Cys312, Cys306–Cys321, Cys323–Cys332, Cys339–Cys350, Cys344–Cys359, Cys361–Cys370, Cys376–Cys387, Cys381–Cys398, Cys400–Cys409, Cys416–Cys429, Cys423–Cys438, and Cys440–Cys449. O-linked (Glc...) serine glycosylation is present at Ser65. O-linked (Fuc...) threonine glycosylation occurs at Thr73. O-linked (Fuc...) threonine glycosylation is present at Thr116. The O-linked (Glc...) serine glycan is linked to Ser146. Residues 178–216 (DVNECSQNPGLCRHGGTCHNEIGSYRCACRATHTGPHCE) form the EGF-like 5; calcium-binding domain. Thr194 carries O-linked (Fuc...) threonine glycosylation. The EGF-like 6 domain maps to 218-255 (PYVPCSPSPCQNGGTCRPTGDTTHECACLPGFAGQNCE). A glycan (O-linked (Fuc...) threonine; alternate) is linked at Thr232. Thr232 is a glycosylation site (O-linked (GalNAc...) threonine; alternate). The region spanning 257 to 293 (NVDDCPGNNCKNGGACVDGVNTYNCRCPPEWTGQYCT) is the EGF-like 7; calcium-binding domain. The 39-residue stretch at 295-333 (DVDECQLMPNACQNGGTCHNTHGGYNCVCVNGWTGEDCS) folds into the EGF-like 8; calcium-binding domain. Thr311 carries an O-linked (Fuc...) threonine glycan. Residues 335-371 (NIDDCASAACFQGATCHDRVASFYCECPHGRTGLLCH) form the EGF-like 9; calcium-binding domain. An O-linked (Glc...) serine glycan is attached at Ser341. Thr349 is a glycosylation site (O-linked (Fuc...) threonine). One can recognise an EGF-like 10; calcium-binding domain in the interval 372–410 (LNDACISNPCNEGSNCDTNPVNGKAICTCPSGYTGPACS). Ser378 carries O-linked (Glc...) serine glycosylation. Residues 412–450 (DVDECALGANPCEHAGKCLNTLGSFECQCLQGYTGPRCE) form the EGF-like 11; calcium-binding domain. Residues 420–421 (AN) form an interaction with DLL4 region. Ca(2+)-binding residues include Thr432 and Ser435. An O-linked (Glc...) serine glycan is attached at Ser435. Residues 448–452 (RCEID) are interaction with DLL4. Ca(2+)-binding residues include Asp452, Val453, and Glu455. Residues 452–488 (DVNECISNPCQNDATCLDQIGEFQCICMPGYEGVYCE) enclose the EGF-like 12; calcium-binding domain. Cystine bridges form between Cys456–Cys467, Cys461–Cys476, and Cys478–Cys487. The O-linked (Glc...) serine glycan is linked to Ser458. Thr466 carries O-linked (Fuc...) threonine glycosylation. Ca(2+) contacts are provided by Asp469 and Gln470. The Ca(2+) site is built by Asn490, Thr491, and Glu493. The region spanning 490–526 (NTDECASSPCLHNGHCMDKINEFQCQCPKGFNGHLCQ) is the EGF-like 13; calcium-binding domain. 75 cysteine pairs are disulfide-bonded: Cys494–Cys505, Cys499–Cys514, Cys516–Cys525, Cys532–Cys543, Cys537–Cys552, Cys554–Cys563, Cys570–Cys580, Cys575–Cys589, Cys591–Cys600, Cys607–Cys618, Cys612–Cys627, Cys629–Cys638, Cys645–Cys655, Cys650–Cys664, Cys666–Cys675, Cys682–Cys693, Cys687–Cys702, Cys704–Cys713, Cys720–Cys730, Cys725–Cys739, Cys741–Cys750, Cys757–Cys768, Cys762–Cys777, Cys779–Cys788, Cys795–Cys806, Cys800–Cys815, Cys817–Cys826, Cys833–Cys844, Cys838–Cys855, Cys857–Cys866, Cys873–Cys884, Cys878–Cys893, Cys895–Cys904, Cys911–Cys922, Cys916–Cys931, Cys933–Cys942, Cys949–Cys960, Cys954–Cys969, Cys971–Cys980, Cys987–Cys998, Cys992–Cys1007, Cys1009–Cys1018, Cys1025–Cys1036, Cys1030–Cys1045, Cys1047–Cys1056, Cys1063–Cys1074, Cys1068–Cys1083, Cys1085–Cys1094, Cys1101–Cys1122, Cys1116–Cys1131, Cys1133–Cys1142, Cys1149–Cys1160, Cys1154–Cys1169, Cys1171–Cys1180, Cys1187–Cys1198, Cys1192–Cys1207, Cys1209–Cys1218, Cys1225–Cys1244, Cys1238–Cys1253, Cys1255–Cys1264, Cys1271–Cys1284, Cys1276–Cys1293, Cys1295–Cys1304, Cys1311–Cys1322, Cys1316–Cys1334, Cys1336–Cys1345, Cys1352–Cys1363, Cys1357–Cys1372, Cys1374–Cys1383, Cys1391–Cys1403, Cys1397–Cys1414, Cys1416–Cys1425, Cys1449–Cys1472, Cys1454–Cys1467, and Cys1463–Cys1479. Ser496 is a glycosylation site (O-linked (Glc...) serine). Ca(2+) contacts are provided by Asp507 and Lys508. Positions 528–564 (DVDECASTPCKNGAKCLDGPNTYTCVCTEGYTGTHCE) constitute an EGF-like 14; calcium-binding domain. O-linked (Glc...) serine glycosylation is present at Ser534. In terms of domain architecture, EGF-like 15; calcium-binding spans 566–601 (DIDECDPDPCHYGSCKDGVATFTCLCQPGYTGHHCE). The region spanning 603 to 639 (NINECHSQPCRHGGTCQDRDNSYLCLCLKGTTGPNCE) is the EGF-like 16; calcium-binding domain. Ser609 carries an O-linked (Glc...) serine glycan. O-linked (Fuc...) threonine glycosylation occurs at Thr617. The EGF-like 17; calcium-binding domain maps to 641 to 676 (NLDDCASNPCDSGTCLDKIDGYECACEPGYTGSMCN). An O-linked (Glc...) serine glycan is attached at Ser647. The EGF-like 18; calcium-binding domain occupies 678–714 (NIDECAGSPCHNGGTCEDGIAGFTCRCPEGYHDPTCL). Residue Thr692 is glycosylated (O-linked (Fuc...) threonine). The EGF-like 19; calcium-binding domain maps to 716-751 (EVNECNSNPCIHGACRDGLNGYKCDCAPGWSGTNCD). Ser722 carries an O-linked (Glc...) serine glycan. One can recognise an EGF-like 20; calcium-binding domain in the interval 753-789 (NNNECESNPCVNGGTCKDMTSGYVCTCREGFSGPNCQ). Ser759 carries an O-linked (Glc...) serine glycan. O-linked (Fuc...) threonine glycosylation is present at Thr767. Ser784 carries an O-linked (GlcNAc) serine glycan. Residues 791-827 (NINECASNPCLNQGTCIDDVAGYKCNCPLPYTGATCE) enclose the EGF-like 21; calcium-binding domain. Ser797 carries an O-linked (Glc...) serine glycan. An O-linked (Fuc...) threonine glycan is attached at Thr805. The 39-residue stretch at 829-867 (VLAPCATSPCKNSGVCKESEDYESFSCVCPTGWQGQTCE) folds into the EGF-like 22 domain. One can recognise an EGF-like 23; calcium-binding domain in the interval 869-905 (DINECVKSPCRHGASCQNTNGSYRCLCQAGYTGRNCE). An N-linked (GlcNAc...) asparagine glycan is attached at Asn888. An O-linked (GlcNAc) threonine glycan is attached at Thr900. The EGF-like 24 domain maps to 907–943 (DIDDCRPNPCHNGGSCTDGINTAFCDCLPGFQGAFCE). Ser921 is a glycosylation site (O-linked (Fuc) serine). The EGF-like 25; calcium-binding domain maps to 945-981 (DINECASNPCQNGANCTDCVDSYTCTCPVGFNGIHCE). Ser951 carries an O-linked (Glc...) serine glycan. Asn959 is a glycosylation site (N-linked (GlcNAc...) asparagine). One can recognise an EGF-like 26 domain in the interval 983–1019 (NTPDCTESSCFNGGTCVDGINSFTCLCPPGFTGSYCQ). The O-linked (Fuc...) threonine glycan is linked to Thr997. Positions 1021–1057 (DVNECDSRPCLHGGTCQDSYGTYKCTCPQGYTGLNCQ) constitute an EGF-like 27; calcium-binding domain. A glycan (O-linked (Glc...) serine) is linked at Ser1027. A glycan (O-linked (Fuc...) threonine) is linked at Thr1035. 2 consecutive EGF-like domains span residues 1059 to 1095 (LVRW…VNCD) and 1097 to 1143 (LSVS…SYCE). A glycan (O-linked (Glc...) serine) is linked at Ser1065. An EGF-like 30; calcium-binding domain is found at 1145–1181 (EVDECSPNPCQNGATCTDYLGGFSCKCVAGYHGSNCS). Thr1159 carries O-linked (Fuc...) threonine glycosylation. A glycan (N-linked (GlcNAc...) asparagine) is linked at Asn1179. The EGF-like 31; calcium-binding domain occupies 1183–1219 (EINECLSQPCQNGGTCIDLTNSYKCSCPRGTQGVHCE). Ser1189 carries O-linked (Glc...) serine glycosylation. Residue Thr1197 is glycosylated (O-linked (Fuc...) threonine). An EGF-like 32; calcium-binding domain is found at 1221 to 1265 (NVDDCHPPLDPASRSPKCFNNGTCVDQVGGYTCTCPPGFVGERCE). Residue Asn1241 is glycosylated (N-linked (GlcNAc...) asparagine). EGF-like domains lie at 1267–1305 (DVNE…RRCE), 1307–1346 (VING…ATCE), 1348–1384 (DART…PECQ), and 1387–1426 (ASSP…LLCH). The O-linked (Glc...) serine glycan is linked to Ser1273. O-linked (Fuc...) threonine glycosylation occurs at Thr1362. Thr1379 carries an O-linked (GlcNAc...) threonine glycan. An O-linked (Fuc...) threonine; alternate glycan is attached at Thr1402. Thr1402 carries an O-linked (GalNAc...) threonine; alternate glycan. LNR repeat units lie at residues 1449 to 1489 (CELP…PWKN), 1490 to 1531 (CTQS…CNPL), and 1532 to 1571 (YDQY…RLAA). Ca(2+) is bound by residues Asp1457, Asn1460, Asp1475, and Asp1478. Asn1489 carries an N-linked (GlcNAc...) asparagine glycan. Disulfide bonds link Cys1490–Cys1514, Cys1496–Cys1509, Cys1505–Cys1521, Cys1536–Cys1549, and Cys1545–Cys1561. The N-linked (GlcNAc...) asparagine glycan is linked to Asn1587. The interaction with PSEN1 stretch occupies residues 1718–1750 (PPLPSQLHLMYVAAAAFVLLFFVGCGVLLSRKR). Residues 1726 to 1746 (LMYVAAAAFVLLFFVGCGVLL) form a helical membrane-spanning segment. At 1747–2531 (SRKRRRQHGQ…QITHIPEAFK (785 aa)) the chain is on the cytoplasmic side. Residue Lys1749 forms a Glycyl lysine isopeptide (Lys-Gly) (interchain with G-Cter in ubiquitin) linkage. Residues 1770–1798 (KKKRREPLGEDSVGLKPLKNASDGALMDD) form a disordered region. Thr1851 carries the phosphothreonine modification. 5 ANK repeats span residues 1917–1946 (TGET…DANI), 1950–1980 (MGRT…DLDA), 1984–2013 (DGTT…DVNA), 2017–2046 (LGKS…NKDM), and 2050–2079 (KEET…NRDI). An HIF1AN-binding region spans residues 1937-1945 (LLEASADAN). Asn1945 is subject to (3S)-3-hydroxyasparagine; by HIF1AN; partial. The segment at 2004–2012 (LINSHADVN) is HIF1AN-binding. (3S)-3-hydroxyasparagine; by HIF1AN; partial is present on Asn2012. Disordered stretches follow at residues 2140 to 2185 (KSAT…DSSS), 2382 to 2428 (QPQN…SLPV), and 2440 to 2531 (PTSL…EAFK). The segment covering 2382–2395 (QPQNLQPPSQPHLS) has biased composition (low complexity). The segment covering 2440–2478 (PTSLPSSMVPPMTTTQFLTPPSQHSYSSSPVDNTPSHQL) has biased composition (polar residues). Positions 2488-2503 (PSPESPDQWSSSSPHS) are enriched in low complexity. Over residues 2504 to 2524 (NISDWSEGISSPPTTMPSQIT) the composition is skewed to polar residues.

It belongs to the NOTCH family. As to quaternary structure, heterodimer of a C-terminal fragment N(TM) and an N-terminal fragment N(EC) which are probably linked by disulfide bonds. Interacts with DNER, DTX1, DTX2 and RBPJ/RBPSUH. Also interacts with MAML1, MAML2 and MAML3 which act as transcriptional coactivators for NOTCH1. Notch 1 intracellular domain interacts with SNW1; the interaction involves multimerized NOTCH1 NICD and is implicated in a formation of an intermediate preactivation complex which associates with DNA-bound CBF-1/RBPJ. The activated membrane-bound form interacts with AAK1 which promotes NOTCH1 stabilization. Forms a trimeric complex with FBXW7 and SGK1. Interacts with HIF1AN. HIF1AN negatively regulates the function of notch intracellular domain (NICD), accelerating myogenic differentiation. Interacts (via NICD) with SNAI1 (via zinc fingers); the interaction induces SNAI1 degradation via MDM2-mediated ubiquitination and inhibits SNAI1-induced cell invasion. Interacts (via NICD) with MDM2A. Interacts (via NICD) with BCL6; the interaction decreases MAML1 recruitment by NOTCH1 NICD on target genes DNA and inhibits NOTCH1 transactivation activity. Interacts with THBS4. Interacts (via the EGF-like repeat region) with CCN3 (via CTCK domain). Interacts (via EGF-like domains) with DLL4 (via N-terminal DSL and MNNL domains). Interacts with ZMIZ1. Interacts (via NICD domain) with MEGF10 (via the cytoplasmic domain). Interacts with DLL1 and JAG1. Interacts (via NICD domain) with PRAG1. Forms a complex with PRAG1, N1ICD and MAML1, in a MAML1-dependent manner. Interacts (via transmembrane region) with PSEN1; the interaction is direct. Interacts with ZFP64. Synthesized in the endoplasmic reticulum as an inactive form which is proteolytically cleaved by a furin-like convertase in the trans-Golgi network before it reaches the plasma membrane to yield an active, ligand-accessible form. Cleavage results in a C-terminal fragment N(TM) and a N-terminal fragment N(EC). Following ligand binding, it is cleaved by ADAM17 to yield a membrane-associated intermediate fragment called notch extracellular truncation (NEXT). Following endocytosis, this fragment is then cleaved by one of the catalytic subunits of gamma-secretase (PSEN1 or PSEN2) to release a Notch-derived peptide containing the intracellular domain (NICD) from the membrane. Post-translationally, phosphorylated. In terms of processing, O-linked glycosylation by GALNT11 is involved in determination of left/right symmetry: glycosylation promotes activation of NOTCH1, possibly by promoting cleavage by ADAM17, modulating the balance between motile and immotile (sensory) cilia at the left-right organiser (LRO). O-glycosylated on the EGF-like domains. O-glucosylated at Ser-435 by KDELC1 and KDELC2. Contains both O-linked fucose and O-linked glucose in the EGF-like domains 11, 12 and 13, which are interacting with the residues on DLL4. O-glycosylation at Ser-1027 is only partial. MFNG-, RFNG- and LFNG-mediated modification of O-fucose residues at specific EGF-like domains results in inhibition of its activation by JAG1 and enhancement of its activation by DLL1 via an increased binding to DLL1. Ubiquitinated. Undergoes 'Lys-29'-linked polyubiquitination by ITCH; promotes the lysosomal degradation of non-activated internalized NOTCH1. Deubiquitination by USP12 is required for transport of internalized non-activated receptor from late endosomes to lysosomes for degradation. Monoubiquitination at Lys-1749 is required for activation by gamma-secretase cleavage, it promotes interaction with AAK1, which stabilizes it. Deubiquitination by EIF3F is necessary for nuclear import of activated Notch. Post-translationally, hydroxylated at Asn-1945 and Asn-2012 by HIF1AN. Hydroxylation reduces affinity for HI1AN and may thus indirectly modulate negative regulation of NICD. Highly expressed in the brain, lung and thymus. Expressed at lower levels in the spleen, bone-marrow, spinal cord, eyes, mammary gland, liver, intestine, skeletal muscle, kidney and heart. In the hair follicle, highly expressed exclusively in the epithelial compartment.

It is found in the cell membrane. Its subcellular location is the late endosome membrane. The protein resides in the nucleus. Functions as a receptor for membrane-bound ligands Jagged-1 (JAG1), Jagged-2 (JAG2) and Delta-1 (DLL1) to regulate cell-fate determination. Upon ligand activation through the released notch intracellular domain (NICD) it forms a transcriptional activator complex with RBPJ/RBPSUH and activates genes of the enhancer of split locus. Affects the implementation of differentiation, proliferation and apoptotic programs. Involved in angiogenesis; negatively regulates endothelial cell proliferation and migration and angiogenic sprouting. Involved in the maturation of both CD4(+) and CD8(+) cells in the thymus. Important for follicular differentiation and possibly cell fate selection within the follicle. During cerebellar development, functions as a receptor for neuronal DNER and is involved in the differentiation of Bergmann glia. Represses neuronal and myogenic differentiation. May play an essential role in postimplantation development, probably in some aspect of cell specification and/or differentiation. May be involved in mesoderm development, somite formation and neurogenesis. May enhance HIF1A function by sequestering HIF1AN away from HIF1A. Required for the THBS4 function in regulating protective astrogenesis from the subventricular zone (SVZ) niche after injury. Involved in determination of left/right symmetry by modulating the balance between motile and immotile (sensory) cilia at the left-right organiser (LRO). The protein is Neurogenic locus notch homolog protein 1 (Notch1) of Mus musculus (Mouse).